Here is a 103-residue protein sequence, read N- to C-terminus: Translation initiation factor 1A (103 aa).

The S1-like domain occupies 11–86 (TRVRTPRENE…EKCDVIWRYT (76 aa)).

Belongs to the eIF-1A family.

In terms of biological role, seems to be required for maximal rate of protein biosynthesis. Enhances ribosome dissociation into subunits and stabilizes the binding of the initiator Met-tRNA(I) to 40 S ribosomal subunits. This is Translation initiation factor 1A (eIF1A) from Methanococcus maripaludis (strain C5 / ATCC BAA-1333).